The sequence spans 450 residues: Beclin-1 (450 aa).

Position 1 is an N-acetylmethionine (methionine 1). Serine 15 and serine 30 each carry phosphoserine. Residues 48-72 (TTAQAKPGETQEEETNSGEEPFIET) are disordered. Residues serine 90, serine 93, and serine 96 each carry the phosphoserine; by AMPK modification. The short motif at 108–127 (TMENLSRRLKVTGDLFDIMS) is the BH3 element. Residues 112 to 159 (LSRRLKVTGDLFDIMSGQTDVDHPLCEECTDTLLDQLDTQLNVTENEC) form an interaction with BCL2 and BCL2L1 region. Threonine 119 carries the phosphothreonine; by DAPK1 modification. Residues 142-269 (DTLLDQLDTQ…QLDKLKKTNV (128 aa)) are a coiled coil. The interval 245–450 (DELKSVENQM…AWVSSQFYNK (206 aa)) is evolutionary conserved domain (ECD). Residues lysine 402 and lysine 437 each participate in a glycyl lysine isopeptide (Lys-Gly) (interchain with G-Cter in ubiquitin) cross-link. The tract at residues 425–450 (WTKALKFMLTNLKWGLAWVSSQFYNK) is required for membrane-association.

The protein belongs to the beclin family. As to quaternary structure, a homodimeric form is proposed to exist; this metastable form readily transits to ATG14- or UVRAG-containing complexes with BECN1:UVRAG being more stable than BECN1:ATG14. Component of the PI3K (PI3KC3/PI3K-III/class III phosphatidylinositol 3-kinase) complex the core of which is composed of the catalytic subunit PIK3C3, the regulatory subunit PIK3R4 and BECN1 associating with additional regulatory/auxiliary subunits to form alternative complex forms. Alternative complex forms containing a fourth regulatory subunit in a mutually exclusive manner are PI3K complex I (PI3KC3-C1) containing ATG14, and PI3K complex II (PI3KC3-C2) containing UVRAG. PI3KC3-C1 displays a V-shaped architecture with PIK3R4 serving as a bridge between PIK3C3 and the ATG14:BECN1 subcomplex. Both, PI3KC3-C1 and PI3KC3-C2, can associate with further regulatory subunits, such as RUBCN, SH3GLB1/Bif-1 and AMBRA1. PI3KC3-C1 probably associates with PIK3CB. Forms a complex with PPP2CA and AMBRA1; AMBRA1 and BECN1 components of the complex regulate MYC stability via different pathways. Component of the complex, at least composed of LRPPRC, BECN1 and BCL2; the interactions prevent BECN1 from forming an autophagy-inducing complex with PIK3C3. Interacts with AMBRA1, GOPC, GRID2. Interacts with BCL2 and BCL2L1 isoform Bcl-X(L); the interaction inhibits BECN1 function in promoting autophagy by interfering with the formation of the PI3K complex. Interacts with cytosolic HMGB1; inhibits the interaction of BECN1 and BCL2 leading to promotion of autophagy. Interacts with USP10, USP13, VMP1, DAPK1, RAB39A. Interacts with the poly-Gln domain of ATXN3; the interaction causes deubiquitination at Lys-402 and stabilizes BECN1. Interacts with SLAMF1. Interacts with TRIM5; the interaction causes activation of BECN1 by causing its dissociation from its inhibitors BCL2 and TAB2. Interacts with active ULK1 (phosphorylated on 'Ser-317') and MEFV simultaneously. Interacts with WDR81 and WDR91; negatively regulates the PI3 kinase/PI3K activity associated with endosomal membranes. Interacts with LAPTM4B; competes with EGFR for LAPTM4B binding; regulates EGFR activity. Interacts with TRIM50. Interacts with TRIM16. Interacts with ATG14; this interaction is increased in the absence of TMEM39A. Interacts with WASHC1; preventing interaction with AMBRA1 and the DCX(AMBRA1) complex and subsequent ubiquitination. Interacts with TRIM17. Interacts with BCL2L10/BCL-B (via BH1 domain). Interacts with SH3BGRL. Interacts with IRGM; enhancing BECN1-interacting partners and influencing the composition of the BECN1 complex. Interacts with ARMC3. Interacts with LRPPRC. Post-translationally, phosphorylation at Thr-119 by DAPK1 reduces its interaction with BCL2 and BCL2L1 and promotes induction of autophagy. In response to autophagic stimuli, phosphorylated at serine residues by AMPK in an ATG14-dependent manner, and this phosphorylation is critical for maximally efficient autophagy. Polyubiquitinated by NEDD4, both with 'Lys-11'- and 'Lys-63'-linkages. 'Lys-11'-linked polyubiquitination leads to degradation and is enhanced when the stabilizing interaction partner VPS34 is depleted. Deubiquitinated by USP10 and USP13, leading to stabilize the PIK3C3/VPS34-containing complexes. Polyubiquitinated at Lys-402 with 'Lys-48'-linkages. 'Lys-48'-linked polyubiquitination of Lys-402 leads to degradation. Deubiquitinated by ATXN3, leading to stabilization. Ubiquitinated at Lys-437 via 'Lys-63'-linkage by the DCX(AMBRA1) complex, thereby increasing the association between BECN1 and PIK3C3 to promote PIK3C3 activity. 'Lys-48'-linked ubiquitination by RNF216 leads to proteasomal degradation and autophagy inhibition. In terms of processing, proteolytically processed by caspases including CASP8 and CASP3; the C-terminal fragments lack autophagy-inducing capacity and are proposed to induce apoptosis. Thus the cleavage is proposed to be an determinant to switch from autophagy to apoptosis pathways affecting cellular homeostasis including viral infections and survival of tumor cells.

The protein localises to the cytoplasm. It localises to the golgi apparatus. The protein resides in the trans-Golgi network membrane. It is found in the endosome membrane. Its subcellular location is the endoplasmic reticulum membrane. The protein localises to the mitochondrion membrane. It localises to the cytoplasmic vesicle. The protein resides in the autophagosome. It is found in the mitochondrion. Its subcellular location is the nucleus. In terms of biological role, plays a central role in autophagy. Acts as a core subunit of the PI3K complex that mediates formation of phosphatidylinositol 3-phosphate; different complex forms are believed to play a role in multiple membrane trafficking pathways: PI3KC3-C1 is involved in initiation of autophagosomes and PI3KC3-C2 in maturation of autophagosomes and endocytosis. Involved in regulation of degradative endocytic trafficking and required for the abscission step in cytokinesis, probably in the context of PI3KC3-C2. Essential for the formation of PI3KC3-C2 but not PI3KC3-C1 PI3K complex forms. Involved in endocytosis. May play a role in antiviral host defense. Beclin-1-C 35 kDa localized to mitochondria can promote apoptosis; it induces the mitochondrial translocation of BAX and the release of proapoptotic factors. This Pongo abelii (Sumatran orangutan) protein is Beclin-1 (BECN1).